The primary structure comprises 112 residues: Peptidyl-tRNA hydrolase (112 aa).

The disordered stretch occupies residues 64–99 (EEAKRAGLPTGLISDAGRTQLEPGTPTALAIGPAPD).

Belongs to the PTH2 family.

Its subcellular location is the cytoplasm. The catalysed reaction is an N-acyl-L-alpha-aminoacyl-tRNA + H2O = an N-acyl-L-amino acid + a tRNA + H(+). Functionally, the natural substrate for this enzyme may be peptidyl-tRNAs which drop off the ribosome during protein synthesis. The polypeptide is Peptidyl-tRNA hydrolase (Halobacterium salinarum (strain ATCC 29341 / DSM 671 / R1)).